Here is a 102-residue protein sequence, read N- to C-terminus: Alpha-hemoglobin-stabilizing protein (102 aa).

The protein belongs to the AHSP family. As to quaternary structure, monomer. Forms a heterodimer with free alpha-hemoglobin. Does not bind beta-hemoglobin nor alpha(2)beta(2) hemoglobin A. Expressed in spleen, bone marrow, and blood, with highest levels in bone marrow.

The protein resides in the cytoplasm. Acts as a chaperone to prevent the harmful aggregation of alpha-hemoglobin during normal erythroid cell development. Specifically protects free alpha-hemoglobin from precipitation. This chain is Alpha-hemoglobin-stabilizing protein (Ahsp), found in Mus musculus (Mouse).